Reading from the N-terminus, the 278-residue chain is MGRKVHPIGFRLGIIKDWSAKWHASDKGFAECLTEDLKLRKAIAKKYVDAAISQVDIERQSNKVTVSVRTARPGIVIGRGGQRVDEMRHFLEELIGKKVQLNIVEISQAELDAFLVARSVAEQIERRVAYRRAMKQAIFRSMQAGAKGIKVCASGRLGGVEIARREVMHEGRVPLHTLRADIDYGCTRAHTALGDIGIKVWVYRGDILPEAKEQSEPEVTEMAAVMADAPAAAVAEAKVADTVAKPKRVTKKAEAEASAEEKPKRAAKKAENITKEEE.

Positions Leu-39–Ser-107 constitute a KH type-2 domain. A disordered region spans residues Ala-244–Glu-278. Residues Lys-251–Glu-278 are compositionally biased toward basic and acidic residues.

The protein belongs to the universal ribosomal protein uS3 family. Part of the 30S ribosomal subunit. Forms a tight complex with proteins S10 and S14.

Its function is as follows. Binds the lower part of the 30S subunit head. Binds mRNA in the 70S ribosome, positioning it for translation. This Dehalococcoides mccartyi (strain ATCC BAA-2266 / KCTC 15142 / 195) (Dehalococcoides ethenogenes (strain 195)) protein is Small ribosomal subunit protein uS3.